We begin with the raw amino-acid sequence, 394 residues long: Potassium channel subfamily K member 18 (394 aa).

Residues 1-31 are Cytoplasmic-facing; sequence MEAEEPPEARRCCPEALGKARGCCPEALGKL. A helical transmembrane segment spans residues 32-52; sequence LPGLCFLCCLVTYALVGAALF. Residue N83 is glycosylated (N-linked (GlcNAc...) asparagine). Residues 114 to 140 constitute an intramembrane region (pore-forming); sequence FLSALFFCCTVFSTVGYGHMYPVTRLG. Residues T127, V128, G129, and Y130 each coordinate K(+). The tract at residues 127 to 132 is selectivity filter 1; that stretch reads TVGYGH. A helical membrane pass occupies residues 142–162; the sequence is FLCMLYALFGIPLMFLVLTDI. Topologically, residues 163 to 292 are cytoplasmic; the sequence is GDILATILSR…EVGQQVERLD (130 aa). The tract at residues 210-215 is interaction with calcineurin; the sequence is PQIVID. The interaction with YWHAH stretch occupies residues 261 to 266; it reads RSNSCP. S264 and S276 each carry phosphoserine. A helical membrane pass occupies residues 293 to 313; it reads IPLPVIALVVFAYISCAAAIL. The segment at residues 326–340 is an intramembrane region (pore-forming); that stretch reads FYFCFVTLTTIGFGD. Residues 335–340 form a selectivity filter 2 region; the sequence is TIGFGD. A helical membrane pass occupies residues 347 to 367; sequence HFFLFFSIYIIVGMEILFIAF. At 368–394 the chain is on the cytoplasmic side; it reads KLMQNRLLHTYKTLMLFVCQREVSLPW.

Belongs to the two pore domain potassium channel (TC 1.A.1.8) family. In terms of assembly, homodimer. Heterodimer with KCNK2. Heterodimer with KCNK10. Interacts with calcineurin. Interacts with YWHAH, in a phosphorylation-dependent manner. Phosphorylation of Ser-264 is required for the binding of 14-3-3eta/YWHAH. Calcineurin-mediated dephosphorylation of Ser-276 enhances channel activity. Post-translationally, N-glycosylated. Detected in brain cortex, cerebellum, dorsal root ganglion, spinal cord and testis. High expression in trigeminal ganglion (at protein level), also expressed in autonomic nervous system ganglia such as the stellate ganglion and paravertebral sympathetic ganglia. Expressed in all adult spinal cord and brain regions, with slightly higher expression in thalamus, hypothalamus, hippocampus and posterior corte (at protein level). In non-neuronal tissues, substantial expression found in lung and heart and weal expression in liver, testis, kidney, small intestine and spleen. Expressed in regulatory T cells (at protein level).

Its subcellular location is the cell membrane. The catalysed reaction is K(+)(in) = K(+)(out). With respect to regulation, activated upon cell stimulation via Ca(2+)-mobilizing receptors, such as CHRM1/M1 muscarinic receptor and AGTR1/AT1a angiotensin receptor. Activated by volatile anesthetics, such as isoflurane and inhibited by local anesthetics such as bupivacaine and lidocaine. Inhibited by extracellular acidic pH. Inhibited by Zn(2+) ions. Inhibited by hydroxy-alpha-sanshool, an ingredient of Schezuan pepper. Inhibited by Ba(2+) ions. K(+) channel that conducts outward and inward rectifying currents at depolarized and hyperpolarized membrane potentials, respectively. The outward rectifying currents are voltage-dependent, coupled to K(+) electrochemical gradient across the membrane, whereas the inward currents can be induced in response to activation of Ca(2+)-mobilizing receptors. Homo- and heterodimerizes to form functional channels with distinct regulatory and gating properties. In trigeminal ganglia sensory neurons, the heterodimers of KCNK18/TRESK and KCNK2/TREK-1 or KCNK10/TREK-2 inhibit neuronal firing and neurogenic inflammation by stabilizing the resting membrane potential at K(+) equilibrium potential as well as by regulating the threshold of action potentials and the spike frequency. In thymocytes, conducts K(+) currents upon T cell receptor (TCR) signaling leading to sustained Ca(2+) influx and NF-kappa-B activation, FOXP3 transcription and positive selection of regulatory T cell (Treg) progenitor subsets. Appears to mediate the analgesics effects of hydroxy-alpha-sanshool, a metabolite naturally present in Schezuan pepper and other Xanthoxylum plants. The polypeptide is Potassium channel subfamily K member 18 (Mus musculus (Mouse)).